Here is a 463-residue protein sequence, read N- to C-terminus: tRNA-splicing endonuclease subunit Sen2 (463 aa).

Phosphoserine is present on residues S32 and S147. Residues 120 to 213 (HDESTVQKIL…VASPSSLNGH (94 aa)) are disordered. Basic and acidic residues-rich tracts occupy residues 139-149 (PYRERKGESPQ) and 159-170 (SSLEGREGKDEL). Active-site residues include Y367 and H375. Phosphoserine is present on residues S406, S409, and S413. The active site involves K414.

The protein belongs to the tRNA-intron endonuclease family. In terms of assembly, tRNA splicing endonuclease is a heterotetramer composed of TSEN2, TSEN15, TSEN34/LENG5 and TSEN54. tRNA splicing endonuclease complex also contains proteins of the pre-mRNA 3'-end processing machinery such as CLP1, CPSF1, CPSF4 and CSTF2.

The protein resides in the nucleus. It is found in the nucleolus. It catalyses the reaction pretRNA = a 3'-half-tRNA molecule with a 5'-OH end + a 5'-half-tRNA molecule with a 2',3'-cyclic phosphate end + an intron with a 2',3'-cyclic phosphate and a 5'-hydroxyl terminus.. Its function is as follows. Constitutes one of the two catalytic subunit of the tRNA-splicing endonuclease complex, a complex responsible for identification and cleavage of the splice sites in pre-tRNA. It cleaves pre-tRNA at the 5'- and 3'-splice sites to release the intron. The products are an intron and two tRNA half-molecules bearing 2',3'-cyclic phosphate and 5'-OH termini. There are no conserved sequences at the splice sites, but the intron is invariably located at the same site in the gene, placing the splice sites an invariant distance from the constant structural features of the tRNA body. Probably carries the active site for 5'-splice site cleavage. The tRNA splicing endonuclease is also involved in mRNA processing via its association with pre-mRNA 3'-end processing factors, establishing a link between pre-tRNA splicing and pre-mRNA 3'-end formation, suggesting that the endonuclease subunits function in multiple RNA-processing events. The polypeptide is tRNA-splicing endonuclease subunit Sen2 (Tsen2) (Rattus norvegicus (Rat)).